The sequence spans 144 residues: Universal stress protein A (144 aa).

The protein belongs to the universal stress protein A family. In terms of assembly, homodimer.

The protein resides in the cytoplasm. Required for resistance to DNA-damaging agents. This is Universal stress protein A (uspA) from Salmonella typhimurium (strain LT2 / SGSC1412 / ATCC 700720).